Here is a 406-residue protein sequence, read N- to C-terminus: Formate-dependent phosphoribosylglycinamide formyltransferase (406 aa).

Residues 28–29 (EL) and glutamate 88 contribute to the N(1)-(5-phospho-beta-D-ribosyl)glycinamide site. ATP is bound by residues arginine 121, lysine 162, 167–172 (SSGKGQ), 202–205 (EGFI), and glutamate 210. Positions 126–320 (RLAAEELGCA…EFELHAKAIL (195 aa)) constitute an ATP-grasp domain. Mg(2+)-binding residues include glutamate 279 and glutamate 291. N(1)-(5-phospho-beta-D-ribosyl)glycinamide-binding positions include aspartate 298, lysine 367, and 374–375 (RR).

It belongs to the PurK/PurT family. Homodimer.

It carries out the reaction N(1)-(5-phospho-beta-D-ribosyl)glycinamide + formate + ATP = N(2)-formyl-N(1)-(5-phospho-beta-D-ribosyl)glycinamide + ADP + phosphate + H(+). Its pathway is purine metabolism; IMP biosynthesis via de novo pathway; N(2)-formyl-N(1)-(5-phospho-D-ribosyl)glycinamide from N(1)-(5-phospho-D-ribosyl)glycinamide (formate route): step 1/1. Functionally, involved in the de novo purine biosynthesis. Catalyzes the transfer of formate to 5-phospho-ribosyl-glycinamide (GAR), producing 5-phospho-ribosyl-N-formylglycinamide (FGAR). Formate is provided by PurU via hydrolysis of 10-formyl-tetrahydrofolate. This chain is Formate-dependent phosphoribosylglycinamide formyltransferase, found in Janthinobacterium sp. (strain Marseille) (Minibacterium massiliensis).